A 735-amino-acid polypeptide reads, in one-letter code: Protein STRUBBELIG-RECEPTOR FAMILY 2 (735 aa).

Residues 1 to 23 form the signal peptide; sequence MKTKQQLRFLATILLTTILFVLA. Over 24 to 297 the chain is Extracellular; the sequence is KTDTDPLEVL…KKKKKGIGAG (274 aa). LRR repeat units lie at residues 78-94, 96-119, 120-140, 142-163, 165-187, 189-211, 212-232, and 233-253; these read LREL…LQHL, NLKI…PPNA, THIN…LPLM, SLQS…VFSG, QIKE…FGTL, NLTS…ADLP, LADL…HFQS, and IPHL…KPWK. Residues asparagine 118, asparagine 128, asparagine 147, asparagine 175, and asparagine 189 are each glycosylated (N-linked (GlcNAc...) asparagine). Asparagine 264 carries N-linked (GlcNAc...) asparagine glycosylation. The chain crosses the membrane as a helical span at residues 298-318; sequence STFLLVGGLALLGTFFALFAV. The Cytoplasmic portion of the chain corresponds to 319 to 735; it reads RMNHRRAQNL…SSPTFSYLSS (417 aa). Positions 358–378 are disordered; sequence PQIKRFQPPPAPQLRHLPSPP. Positions 415 to 695 constitute a Protein kinase domain; it reads FSEENLLGEG…EIVEALTALI (281 aa).

It belongs to the protein kinase superfamily. Ser/Thr protein kinase family. In terms of tissue distribution, expressed in seedlings, roots, stems, leaves, flowers and siliques.

It localises to the membrane. This is Protein STRUBBELIG-RECEPTOR FAMILY 2 (SRF2) from Arabidopsis thaliana (Mouse-ear cress).